A 58-amino-acid polypeptide reads, in one-letter code: Large ribosomal subunit protein bL32 (58 aa).

Belongs to the bacterial ribosomal protein bL32 family.

The sequence is that of Large ribosomal subunit protein bL32 from Prochlorococcus marinus (strain MIT 9303).